The primary structure comprises 132 residues: Small ribosomal subunit protein uS8 (132 aa).

It belongs to the universal ribosomal protein uS8 family. As to quaternary structure, part of the 30S ribosomal subunit. Contacts proteins S5 and S12.

Its function is as follows. One of the primary rRNA binding proteins, it binds directly to 16S rRNA central domain where it helps coordinate assembly of the platform of the 30S subunit. In Stenotrophomonas maltophilia (strain R551-3), this protein is Small ribosomal subunit protein uS8.